Consider the following 236-residue polypeptide: Phosphoribosylaminoimidazole-succinocarboxamide synthase (236 aa).

Belongs to the SAICAR synthetase family.

The enzyme catalyses 5-amino-1-(5-phospho-D-ribosyl)imidazole-4-carboxylate + L-aspartate + ATP = (2S)-2-[5-amino-1-(5-phospho-beta-D-ribosyl)imidazole-4-carboxamido]succinate + ADP + phosphate + 2 H(+). Its pathway is purine metabolism; IMP biosynthesis via de novo pathway; 5-amino-1-(5-phospho-D-ribosyl)imidazole-4-carboxamide from 5-amino-1-(5-phospho-D-ribosyl)imidazole-4-carboxylate: step 1/2. In Rickettsia bellii (strain OSU 85-389), this protein is Phosphoribosylaminoimidazole-succinocarboxamide synthase.